A 147-amino-acid polypeptide reads, in one-letter code: 3-dehydroquinate dehydratase (147 aa).

The Proton acceptor role is filled by Tyr23. Residues Asn74, His80, and Asp87 each coordinate substrate. The Proton donor role is filled by His100. Residues 101–102 and Arg111 each bind substrate; that span reads LS.

It belongs to the type-II 3-dehydroquinase family. Homododecamer.

It carries out the reaction 3-dehydroquinate = 3-dehydroshikimate + H2O. Its pathway is metabolic intermediate biosynthesis; chorismate biosynthesis; chorismate from D-erythrose 4-phosphate and phosphoenolpyruvate: step 3/7. Functionally, catalyzes a trans-dehydration via an enolate intermediate. The polypeptide is 3-dehydroquinate dehydratase (Clostridium botulinum (strain Okra / Type B1)).